The chain runs to 474 residues: Cysteine--tRNA ligase (474 aa).

Cysteine 29 lines the Zn(2+) pocket. Positions 31 to 41 (ATVQGEPHVGH) match the 'HIGH' region motif. Positions 211, 236, and 240 each coordinate Zn(2+). The short motif at 267–271 (KMSKS) is the 'KMSKS' region element. Lysine 270 is an ATP binding site.

Belongs to the class-I aminoacyl-tRNA synthetase family. In terms of assembly, monomer. Zn(2+) is required as a cofactor.

The protein localises to the cytoplasm. It catalyses the reaction tRNA(Cys) + L-cysteine + ATP = L-cysteinyl-tRNA(Cys) + AMP + diphosphate. The sequence is that of Cysteine--tRNA ligase from Beutenbergia cavernae (strain ATCC BAA-8 / DSM 12333 / CCUG 43141 / JCM 11478 / NBRC 16432 / NCIMB 13614 / HKI 0122).